The chain runs to 457 residues: Choline kinase alpha (457 aa).

The disordered stretch occupies residues 1–86 (MKTKFCTGGE…PPADEQPEPR (86 aa)). Low complexity predominate over residues 13-32 (PSPLGLLLSCGSGSAAPAPG). Over residues 55–80 (LALPPPPPLPLPLPLPQPPPPQPPAD) the composition is skewed to pro residues. ATP-binding positions include 117–123 (RGGLSNM), Arg-146, and 207–213 (QFIPSRR). Position 119–121 (119–121 (GLS)) interacts with phosphocholine. Lys-247 is subject to N6-acetyllysine. Ser-279 is modified (phosphoserine). The ATP site is built by Gln-308 and Asp-330.

Belongs to the choline/ethanolamine kinase family. In terms of assembly, homodimer. Heterodimer with CHKB. Monomer; acetylation by KAT5 promotes dissociation of the homodimer and monomerization. As to quaternary structure, (Microbial infection) Interacts with PI4KA/PI4KIIIalpha; CHKA bridges PI4KA/PI4KIIIalpha and hepatitis C virus (HCV) non-structural protein 5A (NS5A) and potentiates NS5A-stimulated PI4KA activity, which then facilitates the targeting of the ternary complex to the ER for viral replication. Post-translationally, phosphorylated at Ser-279 by AMPK in response to glucose deprivation, leading to localization to lipid droplets. Acetylated by KAT5 at Lys-247 following phosphorylation by AMPK, leading to monomerization and conversion into a tyrosine-protein kinase.

The protein resides in the cytoplasm. Its subcellular location is the cytosol. It is found in the lipid droplet. The enzyme catalyses choline + ATP = phosphocholine + ADP + H(+). It carries out the reaction ethanolamine + ATP = phosphoethanolamine + ADP + H(+). It catalyses the reaction L-tyrosyl-[protein] + ATP = O-phospho-L-tyrosyl-[protein] + ADP + H(+). It participates in phospholipid metabolism; phosphatidylcholine biosynthesis; phosphocholine from choline: step 1/1. It functions in the pathway phospholipid metabolism; phosphatidylethanolamine biosynthesis; phosphatidylethanolamine from ethanolamine: step 1/3. Its activity is regulated as follows. Homodimerization or heterodimerization is required for the choline and ethanolamine kinase activities. In terms of biological role, plays a key role in phospholipid biosynthesis by catalyzing the phosphorylation of free choline to phosphocholine, the first step in phosphatidylcholine biosynthesis. Also phosphorylates ethanolamine, thereby contributing to phosphatidylethanolamine biosynthesis. Has higher activity with choline. May contribute to tumor cell growth. Its function is as follows. This isoform plays a key role in lipolysis of lipid droplets following glucose deprivation. In response to glucose deprivation, phosphorylated by AMPK, promoting localization to lipid droplets. Phosphorylation is followed by acetylation by KAT5, leading to dissociation of the homodimer into a monomer. Monomeric CHKA isoform 1 is converted into a tyrosine-protein kinase, which phosphorylates lipid droplet structural proteins PLIN2 and PLIN3, leading to lipolysis of lipid droplets. The polypeptide is Choline kinase alpha (CHKA) (Homo sapiens (Human)).